The primary structure comprises 73 residues: Putative membrane protein insertion efficiency factor (73 aa).

This sequence belongs to the UPF0161 family.

Its subcellular location is the cell inner membrane. Functionally, could be involved in insertion of integral membrane proteins into the membrane. The chain is Putative membrane protein insertion efficiency factor from Neisseria meningitidis serogroup C (strain 053442).